Consider the following 320-residue polypeptide: Tabersonine synthase (320 aa).

The Involved in the stabilization of the negatively charged intermediate by the formation of the oxyanion hole signature appears at His78–Ala80. (-)-tabersonine is bound at residue Gly81. Ser170 (proton acceptor) is an active-site residue. Residue Asp266 is part of the active site. Residue Tyr297 coordinates (-)-tabersonine. The Proton donor/acceptor role is filled by Tyr297.

This sequence belongs to the 'GDXG' lipolytic enzyme family. As to quaternary structure, interacts with dehydroprecondylocarpine acetate synthase (DPAS). In terms of tissue distribution, expressed in leaf epidermis.

It is found in the cytoplasm. The protein localises to the cytosol. Its subcellular location is the nucleus. It catalyses the reaction dehydrosecodine = (-)-tabersonine. The catalysed reaction is dihydroprecondylocarpine acetate = (-)-tabersonine + acetate + H(+). The protein operates within alkaloid biosynthesis. In terms of biological role, component of iboga and aspidosperma monoterpenoid indole alkaloids (MIAs, e.g. tabersonine and catharanthine) biosynthesis pathway from 19E-geissoschizine, psychoactive compounds likely to be used in the treatment of opioid dependence. Catalyzes the conversion of dehydrosecodine to tabersonine, a precursor of vindoline; this process starts with the conversion of dihydroprecondylocarpine acetate to dehydrosecodine. The chain is Tabersonine synthase from Catharanthus roseus (Madagascar periwinkle).